Consider the following 152-residue polypeptide: Succinate dehydrogenase [ubiquinone] cytochrome b small subunit, mitochondrial (152 aa).

A mitochondrion-targeting transit peptide spans 1–21 (MATLLRVSSLCRANRASAFKS). Residues 22-56 (LLIRPVPCLTQDHHMVQTSQIHTSPNHHAGSKAAS) lie on the Mitochondrial matrix side of the membrane. A helical transmembrane segment spans residues 57–78 (MHWTSERALSVALLGLLPAAYL). The Mitochondrial intermembrane portion of the chain corresponds to 79 to 83 (YPGAA). A helical transmembrane segment spans residues 84–104 (MDYSLAAALTLHGHWGLGQVV). H95 serves as a coordination point for heme b. The Mitochondrial matrix portion of the chain corresponds to 105 to 113 (TDYVHGDAK). Residue Y107 coordinates a ubiquinone. A helical transmembrane segment spans residues 114–135 (IKMANTSLFALSALTFAGLCYF). Residues 136–152 (NYHDVGICKAVSMLWSL) lie on the Mitochondrial intermembrane side of the membrane.

The protein belongs to the CybS family. As to quaternary structure, component of complex II composed of four subunits: the flavoprotein (FP) SDHA, iron-sulfur protein (IP) SDHB, and a cytochrome b560 composed of SDHC and SDHD.

It is found in the mitochondrion inner membrane. Its pathway is carbohydrate metabolism; tricarboxylic acid cycle. In terms of biological role, membrane-anchoring subunit of succinate dehydrogenase (SDH) that is involved in complex II of the mitochondrial electron transport chain and is responsible for transferring electrons from succinate to ubiquinone (coenzyme Q). SDH also oxidizes malate to the non-canonical enol form of oxaloacetate, enol-oxaloacetate. Enol-oxaloacetate, which is a potent inhibitor of the succinate dehydrogenase activity, is further isomerized into keto-oxaloacetate. The protein is Succinate dehydrogenase [ubiquinone] cytochrome b small subunit, mitochondrial (sdhd) of Xenopus tropicalis (Western clawed frog).